Consider the following 191-residue polypeptide: Orotate phosphoribosyltransferase (191 aa).

114–122 is a 5-phospho-alpha-D-ribose 1-diphosphate binding site; sequence EDVITTGGS. Residues Thr-118 and Arg-146 each coordinate orotate.

This sequence belongs to the purine/pyrimidine phosphoribosyltransferase family. PyrE subfamily. In terms of assembly, homodimer. It depends on Mg(2+) as a cofactor.

It carries out the reaction orotidine 5'-phosphate + diphosphate = orotate + 5-phospho-alpha-D-ribose 1-diphosphate. It functions in the pathway pyrimidine metabolism; UMP biosynthesis via de novo pathway; UMP from orotate: step 1/2. Functionally, catalyzes the transfer of a ribosyl phosphate group from 5-phosphoribose 1-diphosphate to orotate, leading to the formation of orotidine monophosphate (OMP). This Caldicellulosiruptor saccharolyticus (strain ATCC 43494 / DSM 8903 / Tp8T 6331) protein is Orotate phosphoribosyltransferase.